We begin with the raw amino-acid sequence, 1069 residues long: Carbamoyl phosphate synthase large chain (1069 aa).

Residues 1–401 (MPLNKDIKKV…AFLKGIRSLE (401 aa)) are carboxyphosphate synthetic domain. Residues Arg129, Arg169, Gly175, Gly176, Lys208, Val210, Glu215, Gly241, Ile242, His243, Gln284, and Glu298 each contribute to the ATP site. An ATP-grasp 1 domain is found at 133-327 (RDMMNRIGEP…IAKLAAKIAL (195 aa)). Positions 284, 298, and 300 each coordinate Mg(2+). Positions 284, 298, and 300 each coordinate Mn(2+). An oligomerization domain region spans residues 402-549 (IGKYSLDHNK…YSTYEQYDEV (148 aa)). Residues 550-932 (EVSNNKKVIV…ALYKGFVGAY (383 aa)) form a carbamoyl phosphate synthetic domain region. An ATP-grasp 2 domain is found at 674 to 864 (DELLERLGIS…IVDLATQVML (191 aa)). The ATP site is built by Arg710, Lys749, Leu751, Glu755, Gly780, Val781, His782, Ser783, Gln823, and Glu835. Mg(2+) contacts are provided by Gln823, Glu835, and Asn837. Residues Gln823, Glu835, and Asn837 each coordinate Mn(2+). One can recognise an MGS-like domain in the interval 932–1069 (YMYPSKEKGK…KDLEVFNIAK (138 aa)). The allosteric domain stretch occupies residues 933–1069 (MYPSKEKGKI…KDLEVFNIAK (137 aa)).

Belongs to the CarB family. As to quaternary structure, composed of two chains; the small (or glutamine) chain promotes the hydrolysis of glutamine to ammonia, which is used by the large (or ammonia) chain to synthesize carbamoyl phosphate. Tetramer of heterodimers (alpha,beta)4. It depends on Mg(2+) as a cofactor. Requires Mn(2+) as cofactor.

It catalyses the reaction hydrogencarbonate + L-glutamine + 2 ATP + H2O = carbamoyl phosphate + L-glutamate + 2 ADP + phosphate + 2 H(+). The catalysed reaction is hydrogencarbonate + NH4(+) + 2 ATP = carbamoyl phosphate + 2 ADP + phosphate + 2 H(+). It participates in amino-acid biosynthesis; L-arginine biosynthesis; carbamoyl phosphate from bicarbonate: step 1/1. The protein operates within pyrimidine metabolism; UMP biosynthesis via de novo pathway; (S)-dihydroorotate from bicarbonate: step 1/3. Functionally, large subunit of the glutamine-dependent carbamoyl phosphate synthetase (CPSase). CPSase catalyzes the formation of carbamoyl phosphate from the ammonia moiety of glutamine, carbonate, and phosphate donated by ATP, constituting the first step of 2 biosynthetic pathways, one leading to arginine and/or urea and the other to pyrimidine nucleotides. The large subunit (synthetase) binds the substrates ammonia (free or transferred from glutamine from the small subunit), hydrogencarbonate and ATP and carries out an ATP-coupled ligase reaction, activating hydrogencarbonate by forming carboxy phosphate which reacts with ammonia to form carbamoyl phosphate. The protein is Carbamoyl phosphate synthase large chain of Clostridium beijerinckii (strain ATCC 51743 / NCIMB 8052) (Clostridium acetobutylicum).